The sequence spans 1491 residues: Chromosome partition protein MukB (1491 aa).

34-41 serves as a coordination point for ATP; the sequence is GGNGAGKS. Coiled-coil stretches lie at residues 302-450, 490-600, 781-806, 836-1109, and 1210-1239; these read LIEQ…LKAE, ARSE…RFES, RAAR…AKAS, EQAL…DLRT, and VEAI…ISSD. The tract at residues 667–784 is flexible hinge; the sequence is PGGSNDPRLK…AIPLFGRAAR (118 aa). Positions 1059–1080 are disordered; that stretch reads QRRRDELQERLHTSRSRKSEYE.

The protein belongs to the SMC family. MukB subfamily. As to quaternary structure, homodimerization via its hinge domain. Binds to DNA via its C-terminal region. Interacts, and probably forms a ternary complex, with MukE and MukF via its C-terminal region. The complex formation is stimulated by calcium or magnesium. Interacts with tubulin-related protein FtsZ.

It is found in the cytoplasm. It localises to the nucleoid. Plays a central role in chromosome condensation, segregation and cell cycle progression. Functions as a homodimer, which is essential for chromosome partition. Involved in negative DNA supercoiling in vivo, and by this means organize and compact chromosomes. May achieve or facilitate chromosome segregation by condensation DNA from both sides of a centrally located replisome during cell division. This Vibrio cholerae serotype O1 (strain ATCC 39315 / El Tor Inaba N16961) protein is Chromosome partition protein MukB.